The primary structure comprises 59 residues: Large ribosomal subunit protein uL30 (59 aa).

The protein belongs to the universal ribosomal protein uL30 family. Part of the 50S ribosomal subunit.

This Psychrobacter cryohalolentis (strain ATCC BAA-1226 / DSM 17306 / VKM B-2378 / K5) protein is Large ribosomal subunit protein uL30.